Here is a 407-residue protein sequence, read N- to C-terminus: Digeranylgeranylglycerophospholipid reductase (407 aa).

Ala-15, Glu-34, Cys-45, Ala-46, Gly-48, Arg-99, Ala-123, Asp-281, Gly-293, and Ile-294 together coordinate FAD.

It belongs to the geranylgeranyl reductase family. DGGGPL reductase subfamily. FAD serves as cofactor.

The enzyme catalyses a 2,3-bis-O-phytanyl-sn-glycerol 1-phospholipid + 8 oxidized 2[4Fe-4S]-[ferredoxin] = a 2,3-bis-O-(geranylgeranyl)-sn-glycerol 1-phospholipid + 8 reduced 2[4Fe-4S]-[ferredoxin] + 16 H(+). The catalysed reaction is 2,3-bis-O-(phytanyl)-sn-glycerol 1-phosphate + 8 oxidized 2[4Fe-4S]-[ferredoxin] = 2,3-bis-O-(geranylgeranyl)-sn-glycerol 1-phosphate + 8 reduced 2[4Fe-4S]-[ferredoxin] + 16 H(+). It catalyses the reaction a 2,3-bis-O-phytanyl-sn-glycerol 1-phospholipid + 8 A = a 2,3-bis-O-(geranylgeranyl)-sn-glycerol 1-phospholipid + 8 AH2. It carries out the reaction CDP-2,3-bis-O-(geranylgeranyl)-sn-glycerol + 8 AH2 = CDP-2,3-bis-O-(phytanyl)-sn-glycerol + 8 A. The enzyme catalyses archaetidylserine + 8 AH2 = 2,3-bis-O-phytanyl-sn-glycero-3-phospho-L-serine + 8 A. Its pathway is membrane lipid metabolism; glycerophospholipid metabolism. In terms of biological role, is involved in the reduction of 2,3-digeranylgeranylglycerophospholipids (unsaturated archaeols) into 2,3-diphytanylglycerophospholipids (saturated archaeols) in the biosynthesis of archaeal membrane lipids. Catalyzes the formation of archaetidic acid (2,3-di-O-phytanyl-sn-glyceryl phosphate) from 2,3-di-O-geranylgeranylglyceryl phosphate (DGGGP) via the hydrogenation of each double bond of the isoprenoid chains. Requires the adjacently encoded ferredoxin MA_1485 as the electron donor. Is also probably able to reduce double bonds of geranyl groups in CDP-2,3-bis-O-(geranylgeranyl)-sn-glycerol and archaetidylserine, thus acting at various stages in the biosynthesis of archaeal membrane lipids. In Methanosarcina acetivorans (strain ATCC 35395 / DSM 2834 / JCM 12185 / C2A), this protein is Digeranylgeranylglycerophospholipid reductase.